The sequence spans 78 residues: MSNKGQLLQDPFLNALRREHVPVSIYLVNGIKLQGQVESFDQYVVLLKNTVTQMVYKHAISTVVPARPVNLQQEQAAE.

Residues 10 to 69 (DPFLNALRREHVPVSIYLVNGIKLQGQVESFDQYVVLLKNTVTQMVYKHAISTVVPARPV) enclose the Sm domain.

Belongs to the Hfq family. As to quaternary structure, homohexamer.

RNA chaperone that binds small regulatory RNA (sRNAs) and mRNAs to facilitate mRNA translational regulation in response to envelope stress, environmental stress and changes in metabolite concentrations. Also binds with high specificity to tRNAs. This chain is RNA-binding protein Hfq, found in Dechloromonas aromatica (strain RCB).